The following is a 220-amino-acid chain: Ribosome maturation factor RimP (220 aa).

The span at 1–15 (MSQRGRATRPTGPTG) shows a compositional bias: low complexity. 2 disordered regions span residues 1-35 (MSQR…GGDL) and 184-220 (PGRV…GEER). Positions 198-220 (DGADGADEAGDFDDDDDVEGEER) are enriched in acidic residues.

Belongs to the RimP family.

It is found in the cytoplasm. Required for maturation of 30S ribosomal subunits. The sequence is that of Ribosome maturation factor RimP from Salinispora tropica (strain ATCC BAA-916 / DSM 44818 / JCM 13857 / NBRC 105044 / CNB-440).